The chain runs to 78 residues: Large ribosomal subunit protein bL28 (78 aa).

Belongs to the bacterial ribosomal protein bL28 family.

In Salmonella choleraesuis (strain SC-B67), this protein is Large ribosomal subunit protein bL28.